Here is a 339-residue protein sequence, read N- to C-terminus: Glycerol-3-phosphate dehydrogenase [NAD(P)+] (339 aa).

4 residues coordinate NADPH: serine 15, tyrosine 16, histidine 36, and lysine 110. Residues lysine 110, glycine 139, and threonine 141 each contribute to the sn-glycerol 3-phosphate site. Alanine 143 is an NADPH binding site. Residues lysine 195, aspartate 248, serine 258, arginine 259, and asparagine 260 each coordinate sn-glycerol 3-phosphate. Lysine 195 (proton acceptor) is an active-site residue. Residue arginine 259 coordinates NADPH. Positions 283 and 285 each coordinate NADPH.

It belongs to the NAD-dependent glycerol-3-phosphate dehydrogenase family.

Its subcellular location is the cytoplasm. It catalyses the reaction sn-glycerol 3-phosphate + NAD(+) = dihydroxyacetone phosphate + NADH + H(+). The enzyme catalyses sn-glycerol 3-phosphate + NADP(+) = dihydroxyacetone phosphate + NADPH + H(+). The protein operates within membrane lipid metabolism; glycerophospholipid metabolism. Functionally, catalyzes the reduction of the glycolytic intermediate dihydroxyacetone phosphate (DHAP) to sn-glycerol 3-phosphate (G3P), the key precursor for phospholipid synthesis. In Klebsiella pneumoniae subsp. pneumoniae (strain ATCC 700721 / MGH 78578), this protein is Glycerol-3-phosphate dehydrogenase [NAD(P)+].